A 1569-amino-acid chain; its full sequence is Pentafunctional AROM polypeptide (1569 aa).

The segment at 1–382 (MAEAKKPGPE…HEPRASVVDD (382 aa)) is 3-dehydroquinate synthase. NAD(+) contacts are provided by residues 49–51 (DTN), 84–87 (EASK), 115–117 (GGV), and Asp120. 7-phospho-2-dehydro-3-deoxy-D-arabino-heptonate is bound at residue Arg131. 140–141 (TT) is an NAD(+) binding site. Residues Asp147 and Lys153 each coordinate 7-phospho-2-dehydro-3-deoxy-D-arabino-heptonate. Residue Lys162 participates in NAD(+) binding. Asn163 is a 7-phospho-2-dehydro-3-deoxy-D-arabino-heptonate binding site. NAD(+) contacts are provided by residues 180 to 183 (FLET) and Asn191. Residue Glu195 participates in Zn(2+) binding. 7-phospho-2-dehydro-3-deoxy-D-arabino-heptonate contacts are provided by residues 195 to 198 (EVVK) and Lys248. Glu258 acts as the Proton acceptor; for 3-dehydroquinate synthase activity in catalysis. 7-phospho-2-dehydro-3-deoxy-D-arabino-heptonate contacts are provided by residues 262-266 (RNLLN) and His269. Residue His269 participates in Zn(2+) binding. His273 serves as the catalytic Proton acceptor; for 3-dehydroquinate synthase activity. Positions 285 and 354 each coordinate 7-phospho-2-dehydro-3-deoxy-D-arabino-heptonate. His285 is a Zn(2+) binding site. The interval 395-837 (VTPGVPSNLD…WDILSQAFKV (443 aa)) is EPSP synthase. The For EPSP synthase activity role is filled by Cys819. The tract at residues 859–1053 (ERSVFIIGMR…MEKDHSFFVS (195 aa)) is shikimate kinase. 866-873 (GMRGAGKT) lines the ATP pocket. Residues 1054–1267 (LTVPDVSEAA…AAPGQMSAAE (214 aa)) form a 3-dehydroquinase region. Catalysis depends on His1170, which acts as the Proton acceptor; for 3-dehydroquinate dehydratase activity. Lys1198 (schiff-base intermediate with substrate; for 3-dehydroquinate dehydratase activity) is an active-site residue. The segment at 1280–1569 (PCNFYLFGKP…RDARSAVLGL (290 aa)) is shikimate dehydrogenase.

This sequence in the N-terminal section; belongs to the sugar phosphate cyclases superfamily. Dehydroquinate synthase family. The protein in the 2nd section; belongs to the EPSP synthase family. In the 3rd section; belongs to the shikimate kinase family. It in the 4th section; belongs to the type-I 3-dehydroquinase family. This sequence in the C-terminal section; belongs to the shikimate dehydrogenase family. As to quaternary structure, homodimer. Zn(2+) is required as a cofactor.

It is found in the cytoplasm. It carries out the reaction 7-phospho-2-dehydro-3-deoxy-D-arabino-heptonate = 3-dehydroquinate + phosphate. The enzyme catalyses 3-dehydroquinate = 3-dehydroshikimate + H2O. It catalyses the reaction shikimate + NADP(+) = 3-dehydroshikimate + NADPH + H(+). The catalysed reaction is shikimate + ATP = 3-phosphoshikimate + ADP + H(+). It carries out the reaction 3-phosphoshikimate + phosphoenolpyruvate = 5-O-(1-carboxyvinyl)-3-phosphoshikimate + phosphate. The protein operates within metabolic intermediate biosynthesis; chorismate biosynthesis; chorismate from D-erythrose 4-phosphate and phosphoenolpyruvate: step 2/7. Its pathway is metabolic intermediate biosynthesis; chorismate biosynthesis; chorismate from D-erythrose 4-phosphate and phosphoenolpyruvate: step 3/7. It participates in metabolic intermediate biosynthesis; chorismate biosynthesis; chorismate from D-erythrose 4-phosphate and phosphoenolpyruvate: step 4/7. It functions in the pathway metabolic intermediate biosynthesis; chorismate biosynthesis; chorismate from D-erythrose 4-phosphate and phosphoenolpyruvate: step 5/7. The protein operates within metabolic intermediate biosynthesis; chorismate biosynthesis; chorismate from D-erythrose 4-phosphate and phosphoenolpyruvate: step 6/7. The AROM polypeptide catalyzes 5 consecutive enzymatic reactions in prechorismate polyaromatic amino acid biosynthesis. In Fusarium vanettenii (strain ATCC MYA-4622 / CBS 123669 / FGSC 9596 / NRRL 45880 / 77-13-4) (Fusarium solani subsp. pisi), this protein is Pentafunctional AROM polypeptide.